The following is a 219-amino-acid chain: Putative zinc metalloprotease YwhC (219 aa).

A helical transmembrane segment spans residues 4–24; sequence FLYYPLSLMPYLVITLIVSFT. His26 lines the Zn(2+) pocket. The active site involves Glu27. His30 contacts Zn(2+). The next 4 helical transmembrane spans lie at 52-72, 94-114, 132-152, and 180-200; these read PIKH…FGWA, IAGP…LVLM, FFSI…LPLP, and FIVF…WPML.

The protein belongs to the peptidase M50B family. Zn(2+) serves as cofactor.

The protein localises to the cell membrane. This chain is Putative zinc metalloprotease YwhC (ywhC), found in Bacillus subtilis (strain 168).